Reading from the N-terminus, the 552-residue chain is Probable protein kinase UbiB (552 aa).

A helical membrane pass occupies residues 22–42 (LLPANLPLAATLLLLPFKLFP). Residues 118-498 (SFNIEPLASA…QQLARQRNRR (381 aa)) form the Protein kinase domain. Residues 124-132 (LASASVAQV) and K146 contribute to the ATP site. Residue D281 is the Proton acceptor of the active site. Helical transmembrane passes span 501–521 (ITLL…GEGI) and 530–550 (FGDI…AWLL).

It belongs to the ABC1 family. UbiB subfamily.

Its subcellular location is the cell inner membrane. It functions in the pathway cofactor biosynthesis; ubiquinone biosynthesis [regulation]. Is probably a protein kinase regulator of UbiI activity which is involved in aerobic coenzyme Q (ubiquinone) biosynthesis. The chain is Probable protein kinase UbiB from Cellvibrio japonicus (strain Ueda107) (Pseudomonas fluorescens subsp. cellulosa).